The primary structure comprises 125 residues: Large ribosomal subunit protein bL12 (125 aa).

The protein belongs to the bacterial ribosomal protein bL12 family. As to quaternary structure, homodimer. Part of the ribosomal stalk of the 50S ribosomal subunit. Forms a multimeric L10(L12)X complex, where L10 forms an elongated spine to which 2 to 4 L12 dimers bind in a sequential fashion. Binds GTP-bound translation factors.

In terms of biological role, forms part of the ribosomal stalk which helps the ribosome interact with GTP-bound translation factors. Is thus essential for accurate translation. The chain is Large ribosomal subunit protein bL12 from Rhizobium johnstonii (strain DSM 114642 / LMG 32736 / 3841) (Rhizobium leguminosarum bv. viciae).